The sequence spans 501 residues: Cytochrome P450 4c21 (501 aa).

Residues Glu-309 and Cys-447 each coordinate heme.

The protein belongs to the cytochrome P450 family. Requires heme as cofactor.

The protein resides in the endoplasmic reticulum membrane. The protein localises to the microsome membrane. It catalyses the reaction an organic molecule + reduced [NADPH--hemoprotein reductase] + O2 = an alcohol + oxidized [NADPH--hemoprotein reductase] + H2O + H(+). The chain is Cytochrome P450 4c21 (CYP4C21) from Blattella germanica (German cockroach).